Reading from the N-terminus, the 536-residue chain is Membrane protein insertase YidC (536 aa).

4 helical membrane passes run 5-25 (LIIA…IFPT), 353-373 (GNYG…FFPL), 418-438 (VNPL…FGLY), and 495-515 (MLML…GLVI).

Belongs to the OXA1/ALB3/YidC family. Type 1 subfamily. In terms of assembly, interacts with the Sec translocase complex via SecD. Specifically interacts with transmembrane segments of nascent integral membrane proteins during membrane integration.

It is found in the cell inner membrane. In terms of biological role, required for the insertion and/or proper folding and/or complex formation of integral membrane proteins into the membrane. Involved in integration of membrane proteins that insert both dependently and independently of the Sec translocase complex, as well as at least some lipoproteins. Aids folding of multispanning membrane proteins. The protein is Membrane protein insertase YidC of Geobacter sp. (strain M21).